A 426-amino-acid chain; its full sequence is Serine--tRNA ligase (426 aa).

233 to 235 contributes to the L-serine binding site; it reads TSE. Residue 264-266 coordinates ATP; that stretch reads RAE. E287 provides a ligand contact to L-serine. ATP is bound at residue 351–354; it reads EISS. Residue S387 coordinates L-serine.

The protein belongs to the class-II aminoacyl-tRNA synthetase family. Type-1 seryl-tRNA synthetase subfamily. Homodimer. The tRNA molecule binds across the dimer.

The protein resides in the cytoplasm. It carries out the reaction tRNA(Ser) + L-serine + ATP = L-seryl-tRNA(Ser) + AMP + diphosphate + H(+). The enzyme catalyses tRNA(Sec) + L-serine + ATP = L-seryl-tRNA(Sec) + AMP + diphosphate + H(+). It participates in aminoacyl-tRNA biosynthesis; selenocysteinyl-tRNA(Sec) biosynthesis; L-seryl-tRNA(Sec) from L-serine and tRNA(Sec): step 1/1. Catalyzes the attachment of serine to tRNA(Ser). Is also able to aminoacylate tRNA(Sec) with serine, to form the misacylated tRNA L-seryl-tRNA(Sec), which will be further converted into selenocysteinyl-tRNA(Sec). In Stenotrophomonas maltophilia (strain K279a), this protein is Serine--tRNA ligase.